Reading from the N-terminus, the 764-residue chain is Ribosomal protein S6 kinase alpha-6 (764 aa).

Residues 1–24 (MLPFAPVEDPWDQEDMEVFGSTSS) are disordered. In terms of domain architecture, Protein kinase 1 spans 93–350 (FDLLKVLGQG…VEEVKRHAFF (258 aa)). ATP-binding positions include 99–107 (LGQGSFGKV) and Lys-125. Asp-218 functions as the Proton acceptor in the catalytic mechanism. Residues Ser-252, Ser-392, and Ser-409 each carry the phosphoserine modification. In terms of domain architecture, AGC-kinase C-terminal spans 351–420 (ASIDWNKLYK…VATSIAEEYK (70 aa)). Residues 446-706 (YELKEDIGIG…VLKHPWITQR (261 aa)) form the Protein kinase 2 domain. ATP contacts are provided by residues 452–460 (IGIGSYSVC) and Lys-475. The Proton acceptor role is filled by Asp-563. A Phosphothreonine modification is found at Thr-601.

Belongs to the protein kinase superfamily. AGC Ser/Thr protein kinase family. S6 kinase subfamily. In terms of assembly, forms a complex with MAPK3/ERK1 but not with MAPK9 or MAPK14 in serum-starved cells. Requires Mg(2+) as cofactor. Post-translationally, phosphorylated at Ser-252, Ser-392, and Ser-409 in serum-starved cells.

It is found in the cytoplasm. Its subcellular location is the cytosol. The protein resides in the nucleus. It carries out the reaction L-seryl-[protein] + ATP = O-phospho-L-seryl-[protein] + ADP + H(+). The enzyme catalyses L-threonyl-[protein] + ATP = O-phospho-L-threonyl-[protein] + ADP + H(+). With respect to regulation, constitutively activated by phosphorylation at Ser-252, Ser-392, and Ser-409 in serum-starved cells. Does not require growth factor stimulation for significant kinase activity. In terms of biological role, constitutively active serine/threonine-protein kinase that exhibits growth-factor-independent kinase activity and that may participate in p53/TP53-dependent cell growth arrest signaling and play an inhibitory role during embryogenesis. In Mus musculus (Mouse), this protein is Ribosomal protein S6 kinase alpha-6 (Rps6ka6).